The sequence spans 403 residues: Digeranylgeranylglycerophospholipid reductase 1 (403 aa).

FAD contacts are provided by alanine 14, aspartate 33, cysteine 44, alanine 45, glycine 47, arginine 98, valine 122, aspartate 277, glycine 289, and isoleucine 290.

This sequence belongs to the geranylgeranyl reductase family. DGGGPL reductase subfamily. It depends on FAD as a cofactor.

It carries out the reaction a 2,3-bis-O-phytanyl-sn-glycerol 1-phospholipid + 8 A = a 2,3-bis-O-(geranylgeranyl)-sn-glycerol 1-phospholipid + 8 AH2. It catalyses the reaction 2,3-bis-O-(phytanyl)-sn-glycerol 1-phosphate + 8 A = 2,3-bis-O-(geranylgeranyl)-sn-glycerol 1-phosphate + 8 AH2. The enzyme catalyses CDP-2,3-bis-O-(geranylgeranyl)-sn-glycerol + 8 AH2 = CDP-2,3-bis-O-(phytanyl)-sn-glycerol + 8 A. The catalysed reaction is archaetidylserine + 8 AH2 = 2,3-bis-O-phytanyl-sn-glycero-3-phospho-L-serine + 8 A. Its pathway is membrane lipid metabolism; glycerophospholipid metabolism. In terms of biological role, is involved in the reduction of 2,3-digeranylgeranylglycerophospholipids (unsaturated archaeols) into 2,3-diphytanylglycerophospholipids (saturated archaeols) in the biosynthesis of archaeal membrane lipids. Catalyzes the formation of archaetidic acid (2,3-di-O-phytanyl-sn-glyceryl phosphate) from 2,3-di-O-geranylgeranylglyceryl phosphate (DGGGP) via the hydrogenation of each double bond of the isoprenoid chains. Is also probably able to reduce double bonds of geranyl groups in CDP-2,3-bis-O-(geranylgeranyl)-sn-glycerol and archaetidylserine, thus acting at various stages in the biosynthesis of archaeal membrane lipids. In Methanosphaera stadtmanae (strain ATCC 43021 / DSM 3091 / JCM 11832 / MCB-3), this protein is Digeranylgeranylglycerophospholipid reductase 1.